A 387-amino-acid polypeptide reads, in one-letter code: Putative F-box protein At1g47800 (387 aa).

The 47-residue stretch at 8-54 (LQSLDHIPIDVLFEILVKLPAKSVARFLCVSKVWATMIRGEVFIRSF) folds into the F-box domain.

The polypeptide is Putative F-box protein At1g47800 (Arabidopsis thaliana (Mouse-ear cress)).